Reading from the N-terminus, the 229-residue chain is Glutathione S-transferase 1 (229 aa).

Residues 2-83 (SPVKVFGHPM…YILRKYGGTA (82 aa)) enclose the GST N-terminal domain. Residues 41–42 (HK), 54–55 (KM), and 67–68 (ES) each bind glutathione. In terms of domain architecture, GST C-terminal spans 93 to 223 (GIEELAMVDV…RVCKHMPTEF (131 aa)).

This sequence belongs to the GST superfamily. Phi family.

The enzyme catalyses RX + glutathione = an S-substituted glutathione + a halide anion + H(+). Conjugation of reduced glutathione to a wide number of exogenous and endogenous hydrophobic electrophiles. This Triticum aestivum (Wheat) protein is Glutathione S-transferase 1 (GSTA1).